A 97-amino-acid chain; its full sequence is Large ribosomal subunit protein bL28 (97 aa).

It belongs to the bacterial ribosomal protein bL28 family.

The chain is Large ribosomal subunit protein bL28 from Rickettsia felis (strain ATCC VR-1525 / URRWXCal2) (Rickettsia azadi).